The chain runs to 422 residues: Enolase (422 aa).

Residue Gln-162 coordinates (2R)-2-phosphoglycerate. Catalysis depends on Glu-204, which acts as the Proton donor. Mg(2+) is bound by residues Asp-241, Glu-284, and Asp-311. The (2R)-2-phosphoglycerate site is built by Lys-336, Arg-365, Ser-366, and Lys-387. Lys-336 acts as the Proton acceptor in catalysis.

This sequence belongs to the enolase family. It depends on Mg(2+) as a cofactor.

The protein resides in the cytoplasm. It is found in the secreted. Its subcellular location is the cell surface. It catalyses the reaction (2R)-2-phosphoglycerate = phosphoenolpyruvate + H2O. The protein operates within carbohydrate degradation; glycolysis; pyruvate from D-glyceraldehyde 3-phosphate: step 4/5. Functionally, catalyzes the reversible conversion of 2-phosphoglycerate (2-PG) into phosphoenolpyruvate (PEP). It is essential for the degradation of carbohydrates via glycolysis. This chain is Enolase, found in Bartonella tribocorum (strain CIP 105476 / IBS 506).